A 459-amino-acid polypeptide reads, in one-letter code: Cysteine--tRNA ligase (459 aa).

Residue C28 participates in Zn(2+) binding. Positions 30–40 match the 'HIGH' region motif; it reads MTVYDFCHLGH. Zn(2+) contacts are provided by C209, H234, and E238. The 'KMSKS' region motif lies at 266-270; the sequence is KMAKS. K269 contacts ATP. Positions 440 to 459 are disordered; it reads QARGIELEDTPEGTKWRRTR.

It belongs to the class-I aminoacyl-tRNA synthetase family. As to quaternary structure, monomer. Requires Zn(2+) as cofactor.

It is found in the cytoplasm. It carries out the reaction tRNA(Cys) + L-cysteine + ATP = L-cysteinyl-tRNA(Cys) + AMP + diphosphate. In Halorhodospira halophila (strain DSM 244 / SL1) (Ectothiorhodospira halophila (strain DSM 244 / SL1)), this protein is Cysteine--tRNA ligase.